The sequence spans 72 residues: Sperm protein associated with the nucleus on the X chromosome N1 (72 aa).

Residues Met1–Leu40 form a disordered region. A compositionally biased stretch (basic and acidic residues) spans Gly10–Val35.

It belongs to the SPAN-X family.

This chain is Sperm protein associated with the nucleus on the X chromosome N1 (SPANXN1), found in Pan troglodytes (Chimpanzee).